We begin with the raw amino-acid sequence, 6629 residues long: Replicase polyprotein 1ab (6629 aa).

Topologically, residues 1–1750 (MASSLKQGVS…VASYKTVLCK (1750 aa)) are cytoplasmic. One can recognise a Ubiquitin-like 1 domain in the interval 675 to 780 (KTVTFGETTV…SCHLIYRDYE (106 aa)). A disordered region spans residues 783–802 (DDIEEEDAEECDTDSGEAEE). The Macro domain occupies 1003-1179 (VKPATCEKPK…YFDVTCKQKT (177 aa)). The Ubiquitin-like 2 domain maps to 1175–1227 (CKQKTIYLTEDGVKYRSIVLKPGDSLGQFGQVYAKNKIVFTADDVEDKEILYV). Positions 1236-1497 (EYYGLDAQKY…SKSVKEDVSN (262 aa)) constitute a Peptidase C16 domain. Cys1274 serves as the catalytic For PL-PRO activity. Residues Cys1353, Cys1355, Cys1387, and Cys1390 each contribute to the Zn(2+) site. The C4-type; degenerate zinc finger occupies 1353–1390 (CNCGIKSYELRGLEACIQPVRATNLLHFKTQYSNCPTC). Residues His1437 and Asp1448 each act as for PL-PRO activity in the active site. Residues 1751–1771 (VVLATLLIVWFVYTSNPVMFT) traverse the membrane as a helical segment. The tract at residues 1751-1864 (VVLATLLIVW…KPVAGFVIIC (114 aa)) is HD1. The 65-residue stretch at 1769 to 1833 (MFTGIRVLDF…AYSVEQVYKD (65 aa)) folds into the 3Ecto domain. Residues 1772-1843 (GIRVLDFLFE…AASGFIFNWN (72 aa)) are Lumenal-facing. 2 cysteine pairs are disulfide-bonded: Cys1785-Cys1811 and Cys1802-Cys1808. Residues 1844–1864 (WLYLVFLILFVKPVAGFVIIC) form a helical membrane-spanning segment. Residues 1865–2280 (YCVKYLVLNS…TFKCFKSYFK (416 aa)) lie on the Cytoplasmic side of the membrane. The Y1 stretch occupies residues 1911 to 2001 (YIQVHHILYC…KLKRHVKPTA (91 aa)). The region spanning 1911–2263 (YIQVHHILYC…HTQKLLVEKK (353 aa)) is the CoV Nsp3 Y domain. The Zn(2+) site is built by His1915, Cys1920, Cys1925, Cys1928, Cys1961, His1964, Cys1968, and Cys1971. The segment at 1915–1928 (HHILYCKDVTCEVC) is ZF1. The interval 1961–1971 (CKRHNWYCRNC) is ZF2. The Y2 stretch occupies residues 2002–2104 (YAYHVVDEAC…ILDQALYEQL (103 aa)). The interval 2002 to 2263 (YAYHVVDEAC…HTQKLLVEKK (262 aa)) is coV-Y. The tract at residues 2105-2163 (VVEPVSKSVIDKVCSILSSIISVDTAALNYKAGTLRDALLSITKDEEAVDMAIFCHNHD) is Y3. Residues 2164-2263 (VDYTGDGFTN…HTQKLLVEKK (100 aa)) form a Y4 region. A helical membrane pass occupies residues 2281 to 2301 (WLLIFYILFTACCSGYYYMEV). The HD2 stretch occupies residues 2281–2664 (WLLIFYILFT…LACCYLGFII (384 aa)). Topologically, residues 2302-2559 (SKSFVHPMYD…FFTGVNPNIY (258 aa)) are lumenal. Residues 2560 to 2580 (MQLATMFLILVVVVLIFAMVI) form a helical membrane-spanning segment. Topologically, residues 2581–2611 (KFQGVFKAYATTVFITMLVWVINAFILCVHS) are cytoplasmic. Residues 2612-2632 (YNSVLAVILLVLYCYASLVTS) form a helical membrane-spanning segment. The Lumenal portion of the chain corresponds to 2633-2643 (RNTVIIMHCWL). The helical transmembrane segment at 2644 to 2664 (VFTFGLIVPTWLACCYLGFII) threads the bilayer. The Cytoplasmic portion of the chain corresponds to 2665-3096 (YMYTPLFLWC…SSFVRKATSW (432 aa)). A Nsp4C domain is found at 2684–2779 (LYDGNEFVGN…RYSIGVSRLQ (96 aa)). The region spanning 2780–3086 (SGFKKLVSPS…FNQIGGVRLQ (307 aa)) is the Peptidase C30 domain. Catalysis depends on for 3CL-PRO activity residues His2820 and Cys2922. A helical membrane pass occupies residues 3097–3117 (FWSRCVLACFLFVLCAIVLFT). Residues 3097-3317 (FWSRCVLACF…WLCTCYFGLY (221 aa)) form an HD3 region. Residues 3118–3121 (AVPL) are Lumenal-facing. Residues 3122 to 3142 (KFYVYAAVILLMAVLFISFTV) form a helical membrane-spanning segment. The Cytoplasmic portion of the chain corresponds to 3143-3151 (KHVMAYMDT). Residues 3152-3172 (FLLPTLITVIIGVCAEVPFIY) traverse the membrane as a helical segment. Residues 3173 to 3188 (NTLISQVVIFLSQWYD) lie on the Lumenal side of the membrane. A helical membrane pass occupies residues 3189–3209 (PVVFDTMVPWMFLPLVLYTAF). At 3210 to 3257 (KCVQGCYMNSFNTSLLMLYQFVKLGFVIYTSSNTLTAYTEGNWELFFE) the chain is on the cytoplasmic side. A helical transmembrane segment spans residues 3258 to 3278 (LVHTTVLANVSSNSLIGLFVF). Over 3279–3296 (KCAKWMLYYCNATYLNNY) the chain is Lumenal. Residues 3297–3317 (VLMAVMVNCIGWLCTCYFGLY) traverse the membrane as a helical segment. Residues 3318–6629 (WWVNKVFGLT…FTSDSFVCTM (3312 aa)) are Cytoplasmic-facing. The RdRp Nsp7 cofactor domain maps to 3380-3462 (AKLSDVKCTT…DILKRSTVLQ (83 aa)). Residues 3463-3672 (SVTQEFSHIP…GHNKVDVVLQ (210 aa)) enclose the RdRp Nsp8 cofactor domain. A Nsp9 ssRNA-binding domain is found at 3673–3783 (NNELMPHGVK…GAISNVVVLQ (111 aa)). In terms of domain architecture, ExoN/MTase coactivator spans 3785–3926 (KGHETEEVDA…CDSLRQPKSS (142 aa)). Zn(2+)-binding residues include Cys3858, Cys3861, His3867, Cys3878, Cys3904, Cys3907, Cys3915, and Cys3917. 2 zinc fingers span residues 3858–3878 (CLYCRAHIAHPGSVGNLDGRC) and 3904–3917 (CTVCQCWIGYGCQC). Residues 3940–4198 (YLNRVRGSSE…APERYFEYDV (259 aa)) enclose the NiRAN domain. A Nsp12 Interface domain is found at 4203–4301 (KSYDLLKYDY…MNQDNTMSFS (99 aa)). Positions 4232, 4238, 4243, 4247, and 4424 each coordinate Zn(2+). One can recognise a Nsp12 RNA-dependent RNA polymerase domain in the interval 4302 to 4868 (KMGLSQLMQF…NMYRAPTTLQ (567 aa)). The rdRp Fingers N-ter stretch occupies residues 4304–4517 (GLSQLMQFVG…HQKILKSIVN (214 aa)). The tract at residues 4518-4556 (TRNASVVIGTTKFYGGWDNMLRNLIQGVEDPILMGWDYP) is rdRp Palm N-ter. Residues 4548 to 4710 (PILMGWDYPK…CYNNTLAKQG (163 aa)) enclose the RdRp catalytic domain. The interval 4557–4615 (KCDRAMPNLLRIAASLVLARKHTNCCSWSERIYRLYNECAQVLSETVLATGGIYVKPGG) is rdRp Fingers C-ter. Residues His4578, Cys4581, and Cys4582 each contribute to the Zn(2+) site. Residues 4616-4751 (TSSGDATTAY…EKGPHEFCSQ (136 aa)) are rdRp Palm C-ter. Active-site residues include Ser4695, Asp4696, and Asp4697. Residues 4752–4868 (HTMLVEVDGE…NMYRAPTTLQ (117 aa)) form a rdRp Thumb region. The CV ZBD domain maps to 4869 to 4981 (SCGVCVVCNS…DDFNQLATTN (113 aa)). Positions 4873, 4876, 4884, 4887, 4894, 4897, 4901, 4907, 4918, 4923, 4940, and 4943 each coordinate Zn(2+). The region spanning 5125–5305 (MVPECFVNNI…MVCVKPDIFL (181 aa)) is the (+)RNA virus helicase ATP-binding domain. Residue 5150-5157 (GPPGSGKS) participates in ATP binding. Residues 5306–5477 (AKCYRCPKEI…QGTGLFKICN (172 aa)) enclose the (+)RNA virus helicase C-terminal domain. The ExoN domain maps to 5539-5753 (MFITRDEAIR…RCLAINNAFC (215 aa)). Catalysis depends on residues Asp5557, Glu5559, and Glu5658. Residues Cys5674, Cys5676, Cys5692, His5695, His5723, Cys5727, and His5730 each coordinate Zn(2+). Active-site residues include His5734 and Asp5739. Position 5745 (Cys5745) interacts with Zn(2+). Residues 5762–5989 (YPHIANEDEV…NLWKSFSALQ (228 aa)) enclose the N7-MTase domain. Residue 5797 to 5803 (DIGNPKG) coordinates S-adenosyl-L-methionine. The gpppA-binding stretch occupies residues 5877-5891 (CNGGSLYVNKHAFYT). Positions 5915, 5935, 5946, and 5949 each coordinate Zn(2+). One can recognise a Nsp15 N-terminal oligomerization domain in the interval 5990-6050 (SIDNIAYNMY…SVAFELYAKR (61 aa)). Positions 6051–6166 (NIRTLPNNRI…VYKRVNGAFV (116 aa)) constitute an AV-Nsp11N/CoV-Nsp15M domain. In terms of domain architecture, NendoU spans 6183 to 6324 (EPRSDIERDF…EDGSIKTCYP (142 aa)). Active-site residues include His6212, His6227, Lys6267, Lys6371, Asp6455, Lys6499, and Glu6532. In terms of domain architecture, Nidovirus-type SAM-dependent 2'-O-MTase spans 6327–6626 (QSAWTCGYNM…NTSFTSDSFV (300 aa)).

Belongs to the coronaviruses polyprotein 1ab family. In terms of assembly, interacts with host PHB and PHB2. Interacts with papain-like protease and non-structural protein 6. As to quaternary structure, monomer. Homodimer. Only the homodimer shows catalytic activity. In terms of assembly, eight copies of nsp7 and eight copies of nsp8 assemble to form a heterohexadecamer dsRNA-encircling ring structure. Eight copies of nsp7 and eight copies of nsp8 assemble to form a heterohexadecamer dsRNA-encircling ring structure. Interacts with ORF6 protein. As to quaternary structure, homodimer. In terms of assembly, homododecamer. Interacts with proofreading exoribonuclease nsp14 and 2'-O-methyltransferase nsp16; these interactions enhance nsp14 and nsp16 enzymatic activities. Interacts with host DDX1 (via C-terminus). Interacts with non-structural protein 10. As to quaternary structure, homohexamer. In terms of assembly, interacts with non-structural protein 10. Mn(2+) is required as a cofactor. Requires Zn(2+) as cofactor. In terms of processing, specific enzymatic cleavages in vivo by its own proteases yield mature proteins. 3C-like proteinase nsp5 liberates nsps 6-16 from the polyprotein. Papain-like and 3C-like proteinases are autocatalytically processed. N-glycosylated.

It is found in the host endoplasmic reticulum membrane. The protein resides in the host cytoplasm. It localises to the host perinuclear region. The protein localises to the host endoplasmic reticulum. Its subcellular location is the host endoplasmic reticulum-Golgi intermediate compartment. It catalyses the reaction Thiol-dependent hydrolysis of ester, thioester, amide, peptide and isopeptide bonds formed by the C-terminal Gly of ubiquitin (a 76-residue protein attached to proteins as an intracellular targeting signal).. The enzyme catalyses RNA(n) + a ribonucleoside 5'-triphosphate = RNA(n+1) + diphosphate. It carries out the reaction ATP + H2O = ADP + phosphate + H(+). The catalysed reaction is uridylyl-uridylyl-ribonucleotide-RNA = a 3'-end uridylyl-2',3'-cyclophospho-uridine-RNA + a 5'-end dephospho-ribonucleoside-RNA. It catalyses the reaction a 5'-end diphospho-ribonucleoside in mRNA + GTP + H(+) = a 5'-end (5'-triphosphoguanosine)-ribonucleoside in mRNA + diphosphate. The enzyme catalyses a 5'-end (N(7)-methyl 5'-triphosphoguanosine)-ribonucleoside in mRNA + S-adenosyl-L-methionine = a 5'-end (N(7)-methyl 5'-triphosphoguanosine)-(2'-O-methyl-ribonucleoside) in mRNA + S-adenosyl-L-homocysteine + H(+). Functionally, multifunctional protein involved in the transcription and replication of viral RNAs. Contains the proteinases responsible for the cleavages of the polyprotein. May play a role in the modulation of host cell survival signaling pathway by interacting with host PHB and PHB2. Indeed, these two proteins play a role in maintaining the functional integrity of the mitochondria and protecting cells from various stresses. Its function is as follows. Responsible for the cleavages located at the N-terminus of the replicase polyprotein. In addition, PL-PRO possesses a deubiquitinating/deISGylating activity and processes both 'Lys-48'- and 'Lys-63'-linked polyubiquitin chains from cellular substrates. In terms of biological role, plays a role in host membrane rearrangement that leads to creation of cytoplasmic double-membrane vesicles (DMV) necessary for viral replication. Alone is able to induce paired membranes. Coexpression of nsp3 and nsp4 does not result in the formation of DMVs. Functionally, responsible for the majority of cleavages as it cleaves the C-terminus of replicase polyprotein at 11 sites. Recognizes substrates containing the core sequence [ILMVF]-Q-|-[SGACN]. Inhibited by the substrate-analog Cbz-Val-Asn-Ser-Thr-Leu-Gln-CMK. Forms a hexadecamer with nsp8 (8 subunits of each) that may participate in viral replication by acting as a primase. Alternatively, may synthesize substantially longer products than oligonucleotide primers. Its function is as follows. Forms a hexadecamer with nsp7 (8 subunits of each) that may participate in viral replication by acting as a primase. Alternatively, may synthesize substantially longer products than oligonucleotide primers. In terms of biological role, forms a primer, NSP9-pU, which is utilized by the polymerase for the initiation of RNA chains. Interacts with ribosome signal recognition particle RNA (SRP). Together with NSP8, suppress protein integration into the cell membrane, thereby disrupting host immune defenses. Functionally, plays a pivotal role in viral transcription by stimulating both nsp14 3'-5' exoribonuclease and nsp16 2'-O-methyltransferase activities. Therefore plays an essential role in viral mRNAs cap methylation. RNA-directed RNA polymerase that catalyzes the transcription of viral genomic and subgenomic RNAs. Acts in complex with nsp7 and nsp8 to transcribe both the minus and positive strands of genomic RNA. The kinase-like NiRAN domain of NSP12 attaches one or more nucleotides to the amino terminus of NSP9, forming a covalent RNA-protein intermediate that serves as transcription/replication primer. Subgenomic RNAs (sgRNAs) are formed by discontinuous transcription: The polymerase has the ability to pause at transcription-regulating sequences (TRS) and jump to the leader TRS, resulting in a major deletion. This creates a series of subgenomic RNAs that are replicated, transcribed and translated. In addition, Nsp12 is a subunit of the viral RNA capping enzyme that catalyzes the RNA guanylyltransferase reaction for genomic and sub-genomic RNAs. Subsequently, the NiRAN domain transfers RNA to GDP, and forms the core cap structure GpppA-RNA. Its function is as follows. Multi-functional protein with a zinc-binding domain in N-terminus displaying RNA and DNA duplex-unwinding activities with 5' to 3' polarity. Activity of helicase is dependent on magnesium. In terms of biological role, enzyme possessing two different activities: an exoribonuclease activity acting on both ssRNA and dsRNA in a 3' to 5' direction and a N7-guanine methyltransferase activity. Acts as a proofreading exoribonuclease for RNA replication, thereby lowering The sensitivity of the virus to RNA mutagens. Functionally, plays a role in viral transcription/replication and prevents the simultaneous activation of host cell dsRNA sensors, such as MDA5/IFIH1, OAS, and PKR. Acts by degrading the 5'-polyuridines generated during replication of the poly(A) region of viral genomic and subgenomic RNAs. Catalyzes a two-step reaction in which a 2'3'-cyclic phosphate (2'3'-cP) is first generated by 2'-O transesterification, which is then hydrolyzed to a 3'-phosphate (3'-P). If not degraded, poly(U) RNA would hybridize with poly(A) RNA tails and activate host dsRNA sensors. Methyltransferase that mediates mRNA cap 2'-O-ribose methylation to the 5'-cap structure of viral mRNAs. N7-methyl guanosine cap is a prerequisite for binding of nsp16. Therefore plays an essential role in viral mRNAs cap methylation which is essential to evade immune system. The polypeptide is Replicase polyprotein 1ab (rep) (Gallus gallus (Chicken)).